The primary structure comprises 581 residues: Proline--tRNA ligase (581 aa).

Belongs to the class-II aminoacyl-tRNA synthetase family. ProS type 1 subfamily. Homodimer.

The protein localises to the cytoplasm. It carries out the reaction tRNA(Pro) + L-proline + ATP = L-prolyl-tRNA(Pro) + AMP + diphosphate. Functionally, catalyzes the attachment of proline to tRNA(Pro) in a two-step reaction: proline is first activated by ATP to form Pro-AMP and then transferred to the acceptor end of tRNA(Pro). As ProRS can inadvertently accommodate and process non-cognate amino acids such as alanine and cysteine, to avoid such errors it has two additional distinct editing activities against alanine. One activity is designated as 'pretransfer' editing and involves the tRNA(Pro)-independent hydrolysis of activated Ala-AMP. The other activity is designated 'posttransfer' editing and involves deacylation of mischarged Ala-tRNA(Pro). The misacylated Cys-tRNA(Pro) is not edited by ProRS. The chain is Proline--tRNA ligase from Blochmanniella floridana.